Consider the following 578-residue polypeptide: Arginine--tRNA ligase (578 aa).

Positions 122–132 (PNLAKEMHVGH) match the 'HIGH' region motif.

This sequence belongs to the class-I aminoacyl-tRNA synthetase family. Monomer.

Its subcellular location is the cytoplasm. The enzyme catalyses tRNA(Arg) + L-arginine + ATP = L-arginyl-tRNA(Arg) + AMP + diphosphate. The protein is Arginine--tRNA ligase of Pseudoalteromonas atlantica (strain T6c / ATCC BAA-1087).